Reading from the N-terminus, the 103-residue chain is Sec-independent protein translocase protein TatA (103 aa).

A helical membrane pass occupies residues 1 to 21 (MGNIFSPTHLIVILLIIIVLF). The tract at residues 77–103 (KRATTRVKGSSSSRKGKTSVVKKQRVK) is disordered. Residues 90-103 (RKGKTSVVKKQRVK) show a composition bias toward basic residues.

This sequence belongs to the TatA/E family. In terms of assembly, the Tat system comprises two distinct complexes: a TatABC complex, containing multiple copies of TatA, TatB and TatC subunits, and a separate TatA complex, containing only TatA subunits. Substrates initially bind to the TatABC complex, which probably triggers association of the separate TatA complex to form the active translocon.

It localises to the cell inner membrane. Functionally, part of the twin-arginine translocation (Tat) system that transports large folded proteins containing a characteristic twin-arginine motif in their signal peptide across membranes. TatA could form the protein-conducting channel of the Tat system. In Bartonella henselae (strain ATCC 49882 / DSM 28221 / CCUG 30454 / Houston 1) (Rochalimaea henselae), this protein is Sec-independent protein translocase protein TatA.